An 87-amino-acid chain; its full sequence is Small ribosomal subunit protein uS15 (87 aa).

Belongs to the universal ribosomal protein uS15 family. In terms of assembly, part of the 30S ribosomal subunit. Forms a bridge to the 50S subunit in the 70S ribosome, contacting the 23S rRNA.

In terms of biological role, one of the primary rRNA binding proteins, it binds directly to 16S rRNA where it helps nucleate assembly of the platform of the 30S subunit by binding and bridging several RNA helices of the 16S rRNA. Its function is as follows. Forms an intersubunit bridge (bridge B4) with the 23S rRNA of the 50S subunit in the ribosome. This is Small ribosomal subunit protein uS15 from Clostridium kluyveri (strain NBRC 12016).